We begin with the raw amino-acid sequence, 920 residues long: Phosphoenolpyruvate carboxylase (920 aa).

Active-site residues include H138 and K583.

This sequence belongs to the PEPCase type 1 family. Mg(2+) is required as a cofactor.

The enzyme catalyses oxaloacetate + phosphate = phosphoenolpyruvate + hydrogencarbonate. In terms of biological role, forms oxaloacetate, a four-carbon dicarboxylic acid source for the tricarboxylic acid cycle. The chain is Phosphoenolpyruvate carboxylase from Streptococcus pyogenes serotype M5 (strain Manfredo).